The primary structure comprises 367 residues: Oleoyl-acyl carrier protein thioesterase 2, chloroplastic (367 aa).

A chloroplast-targeting transit peptide spans 1 to 48; that stretch reads MLKLSCNVTDHIHNLFSNSRRIFVPVHRQTRPISCFQLKKEPLRAILS. Residues asparagine 263, histidine 265, and cysteine 300 contribute to the active site.

It belongs to the acyl-ACP thioesterase family.

It localises to the plastid. It is found in the chloroplast. It catalyses the reaction (9Z)-octadecenoyl-[ACP] + H2O = (9Z)-octadecenoate + holo-[ACP] + H(+). Functionally, plays an essential role in chain termination during de novo fatty acid synthesis. Possesses high thioesterase activity for oleoyl-ACP versus other acyl-ACPs. The chain is Oleoyl-acyl carrier protein thioesterase 2, chloroplastic (FATA2) from Arabidopsis thaliana (Mouse-ear cress).